A 228-amino-acid polypeptide reads, in one-letter code: tRNA (guanine-N(1)-)-methyltransferase (228 aa).

Residues glycine 111 and 130–135 (IGDFVL) each bind S-adenosyl-L-methionine.

Belongs to the RNA methyltransferase TrmD family. In terms of assembly, homodimer.

It is found in the cytoplasm. It catalyses the reaction guanosine(37) in tRNA + S-adenosyl-L-methionine = N(1)-methylguanosine(37) in tRNA + S-adenosyl-L-homocysteine + H(+). Its function is as follows. Specifically methylates guanosine-37 in various tRNAs. The chain is tRNA (guanine-N(1)-)-methyltransferase from Ureaplasma urealyticum serovar 10 (strain ATCC 33699 / Western).